We begin with the raw amino-acid sequence, 919 residues long: Hyphally regulated cell wall protein 1 (919 aa).

Residues 1 to 20 (MKVVSNFIFTILLTLNLSAA) form the signal peptide. Asparagine 236 carries an N-linked (GlcNAc...) asparagine glycan. The segment at 332-483 (SAPESESDLN…QSITSSPGQS (152 aa)) is disordered. Residues 344 to 392 (TTSSIETSSYSSAATESSVVSESSSAVDSLTSSSLSSKSESSDVVSSTT) are compositionally biased toward low complexity. Over residues 393 to 414 (NIESSSTAIETTMNSESSTDAG) the composition is skewed to polar residues. Low complexity predominate over residues 415–475 (SSSISQSESS…SNALSSTEQS (61 aa)). Asparagine 449, asparagine 488, asparagine 580, asparagine 585, asparagine 607, asparagine 619, asparagine 631, asparagine 639, asparagine 647, and asparagine 693 each carry an N-linked (GlcNAc...) asparagine glycan. The segment covering 567-590 (DATTTTTTSTGGDNSTGGNESGSN) has biased composition (low complexity). Residues 567-839 (DATTTTTTST…VANPVTTSTE (273 aa)) are disordered. Gly residues-rich tracts occupy residues 607 to 665 (NGSG…GSGS) and 675 to 707 (EGSG…GSGS). The span at 708–724 (QSGSESGSNSGSNEGSN) shows a compositional bias: low complexity. A compositionally biased stretch (gly residues) spans 725 to 783 (PGAGNGSNEGSGQGSGNGSEAGSGQGSGPNNGSGSGHNDGSGSGSNQGSNPGAGSGSGS). Asparagine 729, asparagine 741, and asparagine 755 each carry an N-linked (GlcNAc...) asparagine glycan. A compositionally biased stretch (low complexity) spans 784 to 798 (ESGSNAGSHSGSNEG). Positions 799 to 811 (AKTDSIEGFHTES) are enriched in basic and acidic residues. The segment covering 823–833 (ATVTGNSVANP) has biased composition (polar residues). Asparagine 879 and asparagine 895 each carry an N-linked (GlcNAc...) asparagine glycan. Residue asparagine 895 is the site of GPI-anchor amidated asparagine attachment. Residues 896 to 919 (GSSIVTGGKSILFGLIVSMVVLFM) constitute a propeptide, removed in mature form.

Belongs to the HYR1/IFF family. As to quaternary structure, component of a multiprotein complex of 250 kDa composed of at least HYR1, MP65, and PRA1. In terms of processing, the GPI-anchor is attached to the protein in the endoplasmic reticulum and serves to target the protein to the cell surface. There, the glucosamine-inositol phospholipid moiety is cleaved off and the GPI-modified mannoprotein is covalently attached via its lipidless GPI glycan remnant to the 1,6-beta-glucan of the outer cell wall layer.

It is found in the secreted. The protein resides in the cell wall. It localises to the membrane. In terms of biological role, GPI-anchored hyphal cell wall protein required for hyphal growth and virulence. Involved in innate immune cell evasion through conferring resistance to neutrophil killing. Binds kininogen, the proteinaceous kinin precursor, and contributes to trigger the kinin-forming cascade on the cell surface. Production of kinins is often involved in the human host defense against microbial infections. The chain is Hyphally regulated cell wall protein 1 (HYR1) from Candida albicans (strain SC5314 / ATCC MYA-2876) (Yeast).